The following is a 307-amino-acid chain: Aspartate carbamoyltransferase catalytic subunit (307 aa).

Positions 56 and 57 each coordinate carbamoyl phosphate. Lys84 contacts L-aspartate. Arg106, His136, and Gln139 together coordinate carbamoyl phosphate. The L-aspartate site is built by Arg169 and Arg221. 2 residues coordinate carbamoyl phosphate: Ala262 and Pro263.

Belongs to the aspartate/ornithine carbamoyltransferase superfamily. ATCase family. In terms of assembly, heterododecamer (2C3:3R2) of six catalytic PyrB chains organized as two trimers (C3), and six regulatory PyrI chains organized as three dimers (R2).

The enzyme catalyses carbamoyl phosphate + L-aspartate = N-carbamoyl-L-aspartate + phosphate + H(+). Its pathway is pyrimidine metabolism; UMP biosynthesis via de novo pathway; (S)-dihydroorotate from bicarbonate: step 2/3. Functionally, catalyzes the condensation of carbamoyl phosphate and aspartate to form carbamoyl aspartate and inorganic phosphate, the committed step in the de novo pyrimidine nucleotide biosynthesis pathway. This chain is Aspartate carbamoyltransferase catalytic subunit, found in Streptococcus pneumoniae (strain P1031).